We begin with the raw amino-acid sequence, 325 residues long: uncharacterized protein (325 aa).

Tyr59 (proton donor) is an active-site residue. His117 provides a ligand contact to substrate.

This sequence belongs to the aldo/keto reductase family.

Its subcellular location is the cytoplasm. The protein resides in the nucleus. This is an uncharacterized protein from Schizosaccharomyces pombe (strain 972 / ATCC 24843) (Fission yeast).